A 249-amino-acid chain; its full sequence is tRNA pseudouridine synthase A (249 aa).

Residue Asp52 is the Nucleophile of the active site. Residue Tyr110 participates in substrate binding.

This sequence belongs to the tRNA pseudouridine synthase TruA family. As to quaternary structure, homodimer.

The catalysed reaction is uridine(38/39/40) in tRNA = pseudouridine(38/39/40) in tRNA. Functionally, formation of pseudouridine at positions 38, 39 and 40 in the anticodon stem and loop of transfer RNAs. This Exiguobacterium sibiricum (strain DSM 17290 / CCUG 55495 / CIP 109462 / JCM 13490 / 255-15) protein is tRNA pseudouridine synthase A.